We begin with the raw amino-acid sequence, 614 residues long: Vitamin B12 transporter BtuB (614 aa).

An N-terminal signal peptide occupies residues 1–20; the sequence is MIKKASLLTACSVTAFSAWA. The TonB box motif lies at 26-33; the sequence is DTLVVTAN. In terms of domain architecture, TBDR plug spans 38 to 152; it reads PRSTVLAPTT…IGGVVNIITT (115 aa). Cyanocob(III)alamin is bound by residues L83, S85, N92, and 110 to 111; that span reads VS. One can recognise a TBDR beta-barrel domain in the interval 155–614; sequence EPGTEISAGW…EYTLSGSYTF (460 aa). 3 beta stranded membrane passes run 158 to 165, 169 to 178, and 184 to 195; these read TEISAGWG, YQNYDVSTQQ, and TRVTLLGDYAHT. Positions 199, 211, 213, and 215 each coordinate Ca(2+). Beta stranded transmembrane passes span 217-227 and 232-248; these read FLSKTLYGALE and DAWS…NRTN. Residues Y249 and D250 each coordinate Ca(2+). A251 serves as a coordination point for cyanocob(III)alamin. D261 contributes to the Ca(2+) binding site. Beta stranded transmembrane passes span 263–277, 279–296, 309–325, 328–337, 353–369, 371–381, 385–400, 403–417, 434–443, 449–458, 473–490, 494–509, 517–529, and 535–550; these read RKLY…LRYN, ELIK…KDYN, TLDE…NNVI, HGSIGAGVDW, YDQR…QQVG, FTFEGAARNDD, FGRH…WEFI, YRFI…KAPN, KSKQWEGAFE, VNWRISGYRN, YYNE…TANF, PLTH…ARNA, RRAK…QLDW, and DWGI…YDKD. T309 lines the cyanocob(III)alamin pocket. R517 contacts cyanocob(III)alamin. Y551 contributes to the cyanocob(III)alamin binding site. The next 3 beta stranded transmembrane spans lie at 558-572, 585-596, and 602-614; these read TVKM…LAVA, IANLFDKDYETV, and AGRE…SYTF. The short motif at 597–614 is the TonB C-terminal box element; sequence YGYQTAGREYTLSGSYTF.

The protein belongs to the TonB-dependent receptor family. BtuB (TC 1.B.14.3.1) subfamily.

The protein resides in the cell outer membrane. Functionally, involved in the active translocation of vitamin B12 (cyanocobalamin) across the outer membrane to the periplasmic space. It derives its energy for transport by interacting with the trans-periplasmic membrane protein TonB. In Escherichia coli O139:H28 (strain E24377A / ETEC), this protein is Vitamin B12 transporter BtuB.